We begin with the raw amino-acid sequence, 396 residues long: Smad nuclear-interacting protein 1 (396 aa).

A compositionally biased stretch (basic and acidic residues) spans 1–10; it reads MKAVKSERER. Residues 1–227 form a disordered region; it reads MKAVKSERER…VPAKEKPSFE (227 aa). A Glycyl lysine isopeptide (Lys-Gly) (interchain with G-Cter in SUMO); alternate cross-link involves residue Lys-30. Lys-30 participates in a covalent cross-link: Glycyl lysine isopeptide (Lys-Gly) (interchain with G-Cter in SUMO1); alternate. Lys-30 is covalently cross-linked (Glycyl lysine isopeptide (Lys-Gly) (interchain with G-Cter in SUMO2); alternate). Ser-35, Ser-49, Ser-52, and Ser-54 each carry phosphoserine. Thr-57 is modified (phosphothreonine). Phosphoserine occurs at positions 58 and 99. A compositionally biased stretch (basic residues) spans 77-105; that stretch reads PPKKKNKASGRRSKSPRSKRNRSPHHSTV. A compositionally biased stretch (basic and acidic residues) spans 107–142; the sequence is VKQEREDHPRRGREDRQHREPSEQEHRRARNSDRDR. Residue Lys-108 forms a Glycyl lysine isopeptide (Lys-Gly) (interchain with G-Cter in SUMO2) linkage. Phosphoserine is present on Ser-153. Residues 165–196 are a coiled coil; that stretch reads RDRDTQNLQAQEEEREFYNARRREHRQRNDVG. The residue at position 202 (Ser-202) is a Phosphoserine. The segment covering 213–225 has biased composition (basic and acidic residues); it reads NKEKEVPAKEKPS. A Glycyl lysine isopeptide (Lys-Gly) (interchain with G-Cter in SUMO2) cross-link involves residue Lys-223. Residues 281-344 enclose the FHA domain; the sequence is YLLGRHRRIA…NGTFLNNKRI (64 aa). Residues 373-382 show a composition bias toward basic and acidic residues; it reads SSDTSEIDRK. The tract at residues 373-396 is disordered; the sequence is SSDTSEIDRKDDEDEEEEEEVSDS. Acidic residues predominate over residues 383–396; the sequence is DDEDEEEEEEVSDS. A Phosphoserine modification is found at Ser-394.

Component of activated spliceosome complexes. Component of the minor spliceosome, which splices U12-type introns. Binds SMAD4 and CREBBP/EP300. Binds the SMAD1/OAZ1/PSMB4 complex. Interacts with DROSHA and SMARCA4. Component of the SNARP complex which consists at least of SNIP1, SNW1, THRAP3, BCLAF1 and PNN. In terms of processing, degraded by the proteasome upon binding to the SMAD1/OAZ1/PSMB4 complex. Ubiquitous, with highest expression in heart and skeletal muscle.

The protein resides in the nucleus. Required for pre-mRNA splicing as component of the spliceosome. As a component of the minor spliceosome, involved in the splicing of U12-type introns in pre-mRNAs. Down-regulates NF-kappa-B signaling by competing with RELA for CREBBP/EP300 binding. Involved in the microRNA (miRNA) biogenesis. May be involved in cyclin-D1/CCND1 mRNA stability through the SNARP complex which associates with both the 3'end of the CCND1 gene and its mRNA. This chain is Smad nuclear-interacting protein 1 (SNIP1), found in Homo sapiens (Human).